The chain runs to 375 residues: D-alanine--D-alanine ligase (375 aa).

Residues 145–348 form the ATP-grasp domain; it reads KRLLRDADLE…YPALITRLIE (204 aa). 175-230 serves as a coordination point for ATP; the sequence is ITYLGSSLFVKPANQGSSVGVSKVINRISFDQALALAFCFDDKVLVESAINGRELE. 3 residues coordinate Mg(2+): Asp302, Glu315, and Asn317.

The protein belongs to the D-alanine--D-alanine ligase family. Mg(2+) is required as a cofactor. The cofactor is Mn(2+).

The protein resides in the cytoplasm. It carries out the reaction 2 D-alanine + ATP = D-alanyl-D-alanine + ADP + phosphate + H(+). Its pathway is cell wall biogenesis; peptidoglycan biosynthesis. Functionally, cell wall formation. The chain is D-alanine--D-alanine ligase from Baumannia cicadellinicola subsp. Homalodisca coagulata.